The following is a 419-amino-acid chain: UDP-N-acetylglucosamine 1-carboxyvinyltransferase (419 aa).

Phosphoenolpyruvate is bound at residue K22–N23. Residue R95 coordinates UDP-N-acetyl-alpha-D-glucosamine. Catalysis depends on C119, which acts as the Proton donor. The residue at position 119 (C119) is a 2-(S-cysteinyl)pyruvic acid O-phosphothioketal. UDP-N-acetyl-alpha-D-glucosamine-binding positions include K164–V167, D308, and I330.

The protein belongs to the EPSP synthase family. MurA subfamily.

The protein resides in the cytoplasm. The catalysed reaction is phosphoenolpyruvate + UDP-N-acetyl-alpha-D-glucosamine = UDP-N-acetyl-3-O-(1-carboxyvinyl)-alpha-D-glucosamine + phosphate. It functions in the pathway cell wall biogenesis; peptidoglycan biosynthesis. Cell wall formation. Adds enolpyruvyl to UDP-N-acetylglucosamine. This Rickettsia canadensis (strain McKiel) protein is UDP-N-acetylglucosamine 1-carboxyvinyltransferase.